A 305-amino-acid polypeptide reads, in one-letter code: LysM and putative peptidoglycan-binding domain-containing protein 3 (305 aa).

Residues 1-216 (MAGRNQNRTV…PYYGADWGIG (216 aa)) lie on the Extracellular side of the membrane. Residues asparagine 7 and asparagine 26 are each glycosylated (N-linked (GlcNAc...) asparagine). Residue serine 55 is modified to Phosphoserine. A LysM domain is found at 65-109 (LTKDIQEGDTLNAVALQYCCTVADIKRVNNLISDQDFFALRSIKI). N-linked (GlcNAc...) asparagine glycosylation occurs at asparagine 199. The helical transmembrane segment at 217-237 (WWTAVVIMLIVGIITPVFYLL) threads the bilayer. The Cytoplasmic segment spans residues 238–305 (YYEILAKVDV…PQAHDAQHKT (68 aa)). Positions 253-305 (VGSSHLHPGLTPPTQHREMENEIGPTKGIPVGQQDDHKLYRQDPQAHDAQHKT) are disordered. Over residues 286 to 305 (QDDHKLYRQDPQAHDAQHKT) the composition is skewed to basic and acidic residues.

The protein localises to the cell membrane. Its subcellular location is the golgi apparatus. In terms of biological role, essential for Golgi structural integrity. The protein is LysM and putative peptidoglycan-binding domain-containing protein 3 (Lysmd3) of Mus musculus (Mouse).